Reading from the N-terminus, the 118-residue chain is Thioredoxin H-type 2 (118 aa).

One can recognise a Thioredoxin domain in the interval 2–113 (AEEGQVIGVH…LQQTIAKHIS (112 aa)). Residues Cys-39 and Cys-42 each act as nucleophile in the active site. Residues Cys-39 and Cys-42 are joined by a disulfide bond.

Belongs to the thioredoxin family. Plant H-type subfamily.

It localises to the cytoplasm. Its function is as follows. Participates in various redox reactions through the reversible oxidation of the active center dithiol to a disulfide. The H form is known to activate a number of cytosolic enzymes. The chain is Thioredoxin H-type 2 from Nicotiana tabacum (Common tobacco).